The following is an 88-amino-acid chain: Apolipoprotein C-I (88 aa).

The N-terminal stretch at 1–26 (MRLILSLPVLAVVLAMVLEGPAPAQA) is a signal peptide.

Belongs to the apolipoprotein C1 family.

It localises to the secreted. Inhibitor of lipoprotein binding to the low density lipoprotein (LDL) receptor, LDL receptor-related protein, and very low density lipoprotein (VLDL) receptor. Associates with high density lipoproteins (HDL) and the triacylglycerol-rich lipoproteins in the plasma and makes up about 10% of the protein of the VLDL and 2% of that of HDL. Appears to interfere directly with fatty acid uptake and is also the major plasma inhibitor of cholesteryl ester transfer protein (CETP). Binds free fatty acids and reduces their intracellular esterification. Modulates the interaction of APOE with beta-migrating VLDL and inhibits binding of beta-VLDL to the LDL receptor-related protein. This chain is Apolipoprotein C-I (APOC1), found in Eidolon helvum (Straw-colored fruit bat).